Reading from the N-terminus, the 328-residue chain is Endochitinase (328 aa).

Positions methionine 1–glycine 27 are cleaved as a signal peptide. Residues glutamate 28–glycine 68 enclose the Chitin-binding type-1 domain. Intrachain disulfides connect cysteine 30–cysteine 45, cysteine 39–cysteine 51, cysteine 44–cysteine 58, cysteine 62–cysteine 66, cysteine 97–cysteine 159, cysteine 170–cysteine 178, and cysteine 277–cysteine 309. Glutamate 141 serves as the catalytic Proton donor. Positions serine 318 to glutamine 328 are cleaved as a propeptide — removed in mature form.

This sequence belongs to the glycosyl hydrolase 19 family. Chitinase class I subfamily.

The protein localises to the vacuole. It carries out the reaction Random endo-hydrolysis of N-acetyl-beta-D-glucosaminide (1-&gt;4)-beta-linkages in chitin and chitodextrins.. Functionally, defense against chitin-containing fungal pathogens. The sequence is that of Endochitinase from Phaseolus vulgaris (Kidney bean).